A 201-amino-acid chain; its full sequence is MQTSPLLESLMEALRCLPGVGPKSAQRMAFQLLQRDRSGGMRLAQSLTRAMSEIGHCADCRTFTEQEHCTICSNPRRQQNGQICVVESPADIHAIEQTGQFGGRYFVLMGHLSPMDGIGPGDIGLDLLEKRLETETISEVILATNPTVEGDATANYIGQMCGQYGVLASRIAHGVPVGGELEMVDGTTLSHSLAGRNPIKY.

A C4-type zinc finger spans residues 57 to 72 (CADCRTFTEQEHCTIC). Positions 81–176 (GQICVVESPA…LASRIAHGVP (96 aa)) constitute a Toprim domain.

This sequence belongs to the RecR family.

Functionally, may play a role in DNA repair. It seems to be involved in an RecBC-independent recombinational process of DNA repair. It may act with RecF and RecO. This is Recombination protein RecR from Yersinia enterocolitica serotype O:8 / biotype 1B (strain NCTC 13174 / 8081).